The primary structure comprises 610 residues: Autophagy-related protein 22-1 (610 aa).

A compositionally biased stretch (pro residues) spans Met-1–Pro-11. The segment at Met-1 to Pro-29 is disordered. The chain crosses the membrane as a helical span at residues Ile-35–Ser-55. An N-linked (GlcNAc...) asparagine glycan is attached at Asn-90. 3 helical membrane passes run Ser-120–Phe-140, Thr-152–Val-171, and Cys-189–Pro-209. The tract at residues Gly-229–Pro-265 is disordered. The span at Glu-232–Glu-243 shows a compositional bias: basic and acidic residues. N-linked (GlcNAc...) asparagine glycosylation occurs at Asn-261. The next 8 helical transmembrane spans lie at Val-278–Ala-298, Thr-310–Val-330, Val-384–Ile-404, Val-418–Val-438, Leu-453–Phe-473, Phe-488–Gly-510, Tyr-522–Ile-544, and Gly-553–Ala-573. The tract at residues Ala-588 to Ala-610 is disordered. Over residues Glu-594 to Glu-603 the composition is skewed to acidic residues.

The protein belongs to the ATG22 family.

Its subcellular location is the vacuole membrane. Its function is as follows. Vacuolar effluxer which mediate the efflux of amino acids resulting from autophagic degradation. The release of autophagic amino acids allows the maintenance of protein synthesis and viability during nitrogen starvation. The sequence is that of Autophagy-related protein 22-1 (atg22-1) from Aspergillus terreus (strain NIH 2624 / FGSC A1156).